The following is a 3797-amino-acid chain: A-kinase anchor protein 9 (3797 aa).

The tract at residues 1 to 140 (MEDEERQRKL…SSEQGAQSSQ (140 aa)) is disordered. 2 stretches are compositionally biased toward polar residues: residues 50-65 (HTDQ…SSQR) and 92-108 (EIST…NGCN). The segment covering 115–124 (KPTDPLREEE) has biased composition (basic and acidic residues). Position 139 is a phosphoserine (S139). Coiled-coil stretches lie at residues 140-607 (QTCL…LRTQ) and 640-976 (IHYK…LLAN). Phosphoserine is present on S1288. Disordered stretches follow at residues 1643–1668 (STQT…LERS), 2323–2343 (VVST…EESF), and 2419–2454 (SDNL…ASRT). Basic and acidic residues-rich tracts occupy residues 1648–1668 (DGHD…LERS) and 2328–2343 (QQRE…EESF). Residues 1808-2377 (SRLQAAVEKL…MTHMNNVLKE (570 aa)) are a coiled coil. Polar residues predominate over residues 2438–2454 (KQTSLTRLQESPEASRT). A PKA-RII subunit binding domain region spans residues 2498–2510 (DLQRSLEKFAAAL). Disordered regions lie at residues 2604–2695 (LEEA…SSSG) and 3271–3296 (MEKD…QKKM). Residues 2606–2615 (EAEERPEEGG) show a composition bias toward acidic residues. Residues 2642 to 2669 (PLTEAKEKLSYSLEKEKRTGEQESREAP) are compositionally biased toward basic and acidic residues. The stretch at 2975-3325 (LQKADRRSLL…QVYKLDLEGK (351 aa)) forms a coiled coil. Residues 3279–3294 (QKTLQTEQEANTQGQK) show a composition bias toward polar residues. Phosphoserine occurs at positions 3732, 3755, and 3787.

In terms of assembly, interacts with the regulatory region of protein kinase N (PKN), protein phosphatase 2A (PP2A), protein phosphatase 1 (PP1) and the immature non-phosphorylated form of PKC epsilon. Interacts with CIP4 and FNBP1. Interacts with chloride intracellular channel proteins CLIC1, CLIC4 and CLIC5. CSNK1D binding promotes its centrosomal subcellular location. Interacts with GM130/GOLGA2; leading to recruitment to the Golgi apparatus. Interacts with KCNQ1; targets protein kinase A (PKA) catalytic and regulatory subunits and protein phosphatase 1 (PP1), to the heterodimer KCNQ1-KCNE1. Interacts with PDE4DIP isoform 2; this interaction stabilizes both proteins. In complex with PDE4DIP isoform 2, recruits CAMSAP2 to the Golgi apparatus. Forms a pericentrosomal complex with CDK5RAP2, EB1/MAPRE1 and PDE4DIP isoform 2; within this complex, MAPRE1 binding to CDK5RAP2 may be mediated by PDE4DIP. Interacts with MAPRE1 and MAPRE3. Interacts (via C-terminus) with CAMSAP2; this interaction is much stronger in the presence of PDE4DIP isoform 2. Interacts with CAMSAP3. Interacts (via C-terminus) with the gamma-tubulin ring complex (gamma-TuRC), composed of gamma-tubulin, TUBGCP2, TUBGCP3, TUBGCP4, TUBGCP5 and TUBGCP6.

The protein localises to the golgi apparatus. Its subcellular location is the cytoplasm. It localises to the cytoskeleton. The protein resides in the microtubule organizing center. It is found in the centrosome. Scaffolding protein that assembles several protein kinases and phosphatases on the centrosome and Golgi apparatus. Required to maintain the integrity of the Golgi apparatus. Required for microtubule nucleation at the cis-side of the Golgi apparatus. Required for association of the centrosomes with the poles of the bipolar mitotic spindle during metaphase. In complex with PDE4DIP isoform 2/MMG8/SMYLE, recruits CAMSAP2 to the Golgi apparatus and tethers non-centrosomal minus-end microtubules to the Golgi, an important step for polarized cell movement. In complex with PDE4DIP isoform 2, EB1/MAPRE1 and CDK5RAP2, contributes to microtubules nucleation and extension also from the centrosome to the cell periphery. The chain is A-kinase anchor protein 9 (Akap9) from Mus musculus (Mouse).